The chain runs to 684 residues: Probable potassium transport system protein Kup (684 aa).

12 helical membrane-spanning segments follow: residues 19-39 (ALLVTLGVVYGDIGTSPLYVM), 61-81 (VSLIFWTLLIITTVKYVLIAL), 104-124 (WLVLPAMVGGAALLADGMLTP), 151-171 (QVIWVTILIITFLFFIQRFGT), 177-197 (AFGPIMFVWFTFLGVAGFIAL), 223-243 (MGLFILGSIFLATTGAEALYS), 255-275 (LSWPYVNICLVLNYFGQAVWL), 303-323 (LGAIILATLAAIIASQALISG), 352-372 (LYIPVVNTILWLACLAIIGYF), 381-401 (AYGLAITITMLMTTLLLYQYL), 407-427 (PAVIAIGTLIFFSAIETVFFI), and 433-453 (FLHGGYVTAMIAFIILAVMYV).

It belongs to the HAK/KUP transporter (TC 2.A.72) family.

The protein localises to the cell membrane. The catalysed reaction is K(+)(in) + H(+)(in) = K(+)(out) + H(+)(out). Its function is as follows. Transport of potassium into the cell. Likely operates as a K(+):H(+) symporter. In Lacticaseibacillus casei (strain BL23) (Lactobacillus casei), this protein is Probable potassium transport system protein Kup.